A 443-amino-acid polypeptide reads, in one-letter code: Ribosomal protein uS12 methylthiotransferase RimO (443 aa).

The MTTase N-terminal domain occupies 5-116 (PSVAVAHLGC…IVDVIQRAEA (112 aa)). The [4Fe-4S] cluster site is built by Cys-14, Cys-50, Cys-79, Cys-154, Cys-158, and Cys-161. The Radical SAM core domain occupies 140-370 (TTTEGTAYVR…ALQQPISWQQ (231 aa)). Residues 372–442 (QQEVGKTVQV…AYDLQGQLVS (71 aa)) enclose the TRAM domain.

Belongs to the methylthiotransferase family. RimO subfamily. [4Fe-4S] cluster serves as cofactor.

It is found in the cytoplasm. The enzyme catalyses L-aspartate(89)-[ribosomal protein uS12]-hydrogen + (sulfur carrier)-SH + AH2 + 2 S-adenosyl-L-methionine = 3-methylsulfanyl-L-aspartate(89)-[ribosomal protein uS12]-hydrogen + (sulfur carrier)-H + 5'-deoxyadenosine + L-methionine + A + S-adenosyl-L-homocysteine + 2 H(+). In terms of biological role, catalyzes the methylthiolation of an aspartic acid residue of ribosomal protein uS12. This is Ribosomal protein uS12 methylthiotransferase RimO from Acaryochloris marina (strain MBIC 11017).